The sequence spans 141 residues: Large ribosomal subunit protein uL11 (141 aa).

It belongs to the universal ribosomal protein uL11 family. As to quaternary structure, part of the ribosomal stalk of the 50S ribosomal subunit. Interacts with L10 and the large rRNA to form the base of the stalk. L10 forms an elongated spine to which L12 dimers bind in a sequential fashion forming a multimeric L10(L12)X complex. Post-translationally, one or more lysine residues are methylated.

Forms part of the ribosomal stalk which helps the ribosome interact with GTP-bound translation factors. In Streptococcus pyogenes serotype M1, this protein is Large ribosomal subunit protein uL11.